A 449-amino-acid chain; its full sequence is UDP-N-acetylmuramate--L-alanine ligase (449 aa).

121–127 (GAHGKSS) is a binding site for ATP.

The protein belongs to the MurCDEF family.

Its subcellular location is the cytoplasm. It catalyses the reaction UDP-N-acetyl-alpha-D-muramate + L-alanine + ATP = UDP-N-acetyl-alpha-D-muramoyl-L-alanine + ADP + phosphate + H(+). The protein operates within cell wall biogenesis; peptidoglycan biosynthesis. Cell wall formation. The protein is UDP-N-acetylmuramate--L-alanine ligase of Helicobacter pylori (strain P12).